The chain runs to 378 residues: 3,6-diketocamphane 1,6-monooxygenase (378 aa).

Residues H10, S44, M76, and 201–209 (TGFSYNSPS) each bind FMN.

It belongs to the bacterial luciferase oxidoreductase family. Homodimer. Likely forms a loose transient complex with a P.putida flavin reductase that provides the required FMNH(2) to the enzyme.

The catalysed reaction is (1S,4S)-bornane-2,5-dione + FMNH2 + O2 = (1S,4S)-5-oxo-1,2-campholide + FMN + H2O + H(+). Functionally, involved in the degradation and assimilation of (-)-camphor, which allows P.putida strain NCIMB 10007 to grow on this enantiomer of camphor as the sole carbon source. Catalyzes the FMNH(2)-dependent lactonization of 3,6-diketocamphane via a Baeyer-Villiger oxidation to produce the unstable lactone 5-oxo-1,2-campholide with (S,S) configuration, that presumably undergoes spontaneous hydrolysis to form 2-oxo-Delta(3)-4,5,5-trimethylcyclopentenylacetate. Is also able to convert (-)-camphor to the corresponding lactone in vitro. Shows no conversion of (+)-camphor, (+)-fenchone, (-)-fenchone, and (+)-nopinone. Acts on other bicyclic ketones but very poorly on a few 2- and 4-substituted monocyclic ketones. In Pseudomonas putida (Arthrobacter siderocapsulatus), this protein is 3,6-diketocamphane 1,6-monooxygenase.